The following is a 324-amino-acid chain: Thiamine thiazole synthase (324 aa).

Residues Cys-86, 107 to 108, Gly-115, and Val-180 each bind substrate; that span reads EA. A 2,3-didehydroalanine (Cys) modification is found at Cys-213. Substrate-binding positions include Asp-215, His-230, Met-282, and 292–294; that span reads RMG.

This sequence belongs to the THI4 family. Homooctamer. Fe cation is required as a cofactor. During the catalytic reaction, a sulfide is transferred from Cys-213 to a reaction intermediate, generating a dehydroalanine residue.

It localises to the cytoplasm. The protein localises to the nucleus. The enzyme catalyses [ADP-thiazole synthase]-L-cysteine + glycine + NAD(+) = [ADP-thiazole synthase]-dehydroalanine + ADP-5-ethyl-4-methylthiazole-2-carboxylate + nicotinamide + 3 H2O + 2 H(+). In terms of biological role, involved in biosynthesis of the thiamine precursor thiazole. Catalyzes the conversion of NAD and glycine to adenosine diphosphate 5-(2-hydroxyethyl)-4-methylthiazole-2-carboxylic acid (ADT), an adenylated thiazole intermediate. The reaction includes an iron-dependent sulfide transfer from a conserved cysteine residue of the protein to a thiazole intermediate. The enzyme can only undergo a single turnover, which suggests it is a suicide enzyme. May have additional roles in adaptation to various stress conditions and in DNA damage tolerance. The polypeptide is Thiamine thiazole synthase (sti35) (Fusarium solani subsp. phaseoli (Nectria haematococca)).